The primary structure comprises 1382 residues: DNA-directed RNA polymerase subunit beta' (1382 aa).

Positions 70, 72, 85, and 88 each coordinate Zn(2+). Asp-460, Asp-462, and Asp-464 together coordinate Mg(2+). Residues Cys-808, Cys-882, Cys-889, and Cys-892 each contribute to the Zn(2+) site.

It belongs to the RNA polymerase beta' chain family. The RNAP catalytic core consists of 2 alpha, 1 beta, 1 beta' and 1 omega subunit. When a sigma factor is associated with the core the holoenzyme is formed, which can initiate transcription. Mg(2+) serves as cofactor. It depends on Zn(2+) as a cofactor.

The catalysed reaction is RNA(n) + a ribonucleoside 5'-triphosphate = RNA(n+1) + diphosphate. Its function is as follows. DNA-dependent RNA polymerase catalyzes the transcription of DNA into RNA using the four ribonucleoside triphosphates as substrates. This Citrifermentans bemidjiense (strain ATCC BAA-1014 / DSM 16622 / JCM 12645 / Bem) (Geobacter bemidjiensis) protein is DNA-directed RNA polymerase subunit beta'.